The following is a 168-amino-acid chain: MTAGTVVITGGILATVILLCIIAVLCYCRLQYYCCKKGTDGEDAEEEEEEEEHGLSIHPRVPACNACSSHVLDGRGGLAPLTSESCSQPCGVASHCTTCSPYRTPFYIRTADMVPNGGGGERLSFAPTHYKEGGTPSLKLAAPQNYPVTWPSSGHEAFTNPRAISTDV.

Residues 6–26 (VVITGGILATVILLCIIAVLC) form a helical membrane-spanning segment.

The protein belongs to the FAM163 family.

The protein resides in the membrane. This Mus musculus (Mouse) protein is Protein FAM163A (Fam163a).